A 321-amino-acid chain; its full sequence is Queuosine 5'-phosphate N-glycosylase/hydrolase (321 aa).

Residues Phe227, Asp229, and Asp296 each coordinate queuine. The Nucleophile or transition state stabilizer role is filled by Asp229.

Belongs to the QNG1 protein family.

The catalysed reaction is queuosine 5'-phosphate + H2O = queuine + D-ribose 5-phosphate. In terms of biological role, catalyzes the hydrolysis of queuosine 5'-phosphate, releasing the nucleobase queuine (q). Is required for salvage of queuine from exogenous queuosine (Q) that is imported and then converted to queuosine 5'-phosphate intracellularly. This chain is Queuosine 5'-phosphate N-glycosylase/hydrolase, found in Dictyostelium discoideum (Social amoeba).